The following is a 313-amino-acid chain: Ribosomal RNA small subunit methyltransferase H (313 aa).

S-adenosyl-L-methionine contacts are provided by residues 35–37 (GGH), Asp55, Phe79, Asp101, and Gln108.

It belongs to the methyltransferase superfamily. RsmH family.

The protein resides in the cytoplasm. It catalyses the reaction cytidine(1402) in 16S rRNA + S-adenosyl-L-methionine = N(4)-methylcytidine(1402) in 16S rRNA + S-adenosyl-L-homocysteine + H(+). Specifically methylates the N4 position of cytidine in position 1402 (C1402) of 16S rRNA. This is Ribosomal RNA small subunit methyltransferase H from Musicola paradisiaca (strain Ech703) (Dickeya paradisiaca).